Consider the following 337-residue polypeptide: RNA 3'-terminal phosphate cyclase (337 aa).

ATP is bound by residues Q101 and 282–285 (HMSD). H306 (tele-AMP-histidine intermediate) is an active-site residue.

The protein belongs to the RNA 3'-terminal cyclase family. Type 1 subfamily.

The protein localises to the cytoplasm. The catalysed reaction is a 3'-end 3'-phospho-ribonucleotide-RNA + ATP = a 3'-end 2',3'-cyclophospho-ribonucleotide-RNA + AMP + diphosphate. Functionally, catalyzes the conversion of 3'-phosphate to a 2',3'-cyclic phosphodiester at the end of RNA. The mechanism of action of the enzyme occurs in 3 steps: (A) adenylation of the enzyme by ATP; (B) transfer of adenylate to an RNA-N3'P to produce RNA-N3'PP5'A; (C) and attack of the adjacent 2'-hydroxyl on the 3'-phosphorus in the diester linkage to produce the cyclic end product. The biological role of this enzyme is unknown but it is likely to function in some aspects of cellular RNA processing. This Saccharolobus solfataricus (strain ATCC 35092 / DSM 1617 / JCM 11322 / P2) (Sulfolobus solfataricus) protein is RNA 3'-terminal phosphate cyclase (rtcA).